The primary structure comprises 871 residues: Synaptonemal complex protein 1 (871 aa).

Residues 1–40 (MQKLGFPAMKSLDKPRSLSGSANMYSFSNRKPPDSVSSGS) are disordered. Residues 18–40 (LSGSANMYSFSNRKPPDSVSSGS) show a composition bias toward polar residues. Coiled coils occupy residues 58–304 (MRTD…DKKN) and 331–608 (LALD…EESK). 2 disordered regions span residues 708-741 (VMSD…RSEH) and 778-871 (SVLS…YAFD). A compositionally biased stretch (polar residues) spans 719–728 (VNSNKNYSIS). Residues 729 to 741 (KDSRLGGSKRSEH) show a composition bias toward basic and acidic residues. The segment covering 831–847 (LTPQSIAKGTGMTSHAR) has biased composition (polar residues).

It is found in the nucleus. Functionally, required for chromosome synapsis and normal fidelity of crossing over. The sequence is that of Synaptonemal complex protein 1 (ZYP1A) from Arabidopsis thaliana (Mouse-ear cress).